The chain runs to 248 residues: MNILSCSINTFKELLYDISGVEVGQHFYWQIGGFQVHGQVLITSWVVIAILLGSSILAVRNPQTIPTDVQNFFEYVLEFIRDVSKTQIGEEYGPWVPFIGTLFLFIFVSNWSGALFPWKIIQLPQGELAAPTNDINTTVALALLTSVAYFYAGLTKKGLAYFNKYIQPTPILLPINILEDFTKPLSLSFRLFGNILADELVVVVLLSLVPLVVPIPVMFLGLFTSGIQALIFATLAAAYIGESMEGHH.

Helical transmembrane passes span 39 to 59 (QVLITSWVVIAILLGSSILAV), 96 to 116 (VPFIGTLFLFIFVSNWSGALF), 135 to 155 (INTTVALALLTSVAYFYAGLT), 200 to 220 (LVVVVLLSLVPLVVPIPVMFL), and 221 to 241 (GLFTSGIQALIFATLAAAYIG).

The protein belongs to the ATPase A chain family. F-type ATPases have 2 components, CF(1) - the catalytic core - and CF(0) - the membrane proton channel. CF(1) has five subunits: alpha(3), beta(3), gamma(1), delta(1), epsilon(1). CF(0) has four main subunits: a, b, b' and c.

It localises to the plastid. Its subcellular location is the chloroplast thylakoid membrane. In terms of biological role, key component of the proton channel; it plays a direct role in the translocation of protons across the membrane. The chain is ATP synthase subunit a, chloroplastic from Pelargonium hortorum (Common geranium).